Consider the following 196-residue polypeptide: Large ribosomal subunit protein bL25 (196 aa).

The disordered stretch occupies residues 177–196 (VISIAPPKKDAEAETESAAG).

This sequence belongs to the bacterial ribosomal protein bL25 family. CTC subfamily. As to quaternary structure, part of the 50S ribosomal subunit; part of the 5S rRNA/L5/L18/L25 subcomplex. Contacts the 5S rRNA. Binds to the 5S rRNA independently of L5 and L18.

Its function is as follows. This is one of the proteins that binds to the 5S RNA in the ribosome where it forms part of the central protuberance. This Chlorobium limicola (strain DSM 245 / NBRC 103803 / 6330) protein is Large ribosomal subunit protein bL25.